The following is a 284-amino-acid chain: Four and a half LIM domains protein 5 (284 aa).

A C4-type zinc finger spans residues 8–32 (CQYCTASLLGKKYVLKDDNLYCISC). LIM zinc-binding domains lie at 39-100 (NYCE…ECSS), 101-160 (KCFH…KEFA), 161-220 (HYCN…LYAK), and 221-283 (KCAA…ADTD).

In terms of assembly, interacts with CREM (via the third LIM domain). Interacts (via second LIM domain) with SPAG8.

The protein resides in the nucleus. Functionally, may be involved in the regulation of spermatogenesis. Stimulates CREM transcriptional activity in a phosphorylation-independent manner. The chain is Four and a half LIM domains protein 5 (Fhl5) from Rattus norvegicus (Rat).